Reading from the N-terminus, the 268-residue chain is Glucosamine-6-phosphate deaminase (268 aa).

The active-site Proton acceptor; for enolization step is the Asp72. Catalysis depends on Asp141, which acts as the For ring-opening step. The Proton acceptor; for ring-opening step role is filled by His143. Glu148 (for ring-opening step) is an active-site residue.

It belongs to the glucosamine/galactosamine-6-phosphate isomerase family. NagB subfamily.

It carries out the reaction alpha-D-glucosamine 6-phosphate + H2O = beta-D-fructose 6-phosphate + NH4(+). It participates in amino-sugar metabolism; N-acetylneuraminate degradation; D-fructose 6-phosphate from N-acetylneuraminate: step 5/5. Its activity is regulated as follows. Allosterically activated by N-acetylglucosamine 6-phosphate (GlcNAc6P). Its function is as follows. Catalyzes the reversible isomerization-deamination of glucosamine 6-phosphate (GlcN6P) to form fructose 6-phosphate (Fru6P) and ammonium ion. This Borrelia garinii subsp. bavariensis (strain ATCC BAA-2496 / DSM 23469 / PBi) (Borreliella bavariensis) protein is Glucosamine-6-phosphate deaminase.